The sequence spans 648 residues: 1-deoxy-D-xylulose-5-phosphate synthase (648 aa).

Residues H79 and 120-122 each bind thiamine diphosphate; that span reads GHA. Residue D152 participates in Mg(2+) binding. Thiamine diphosphate is bound by residues 153-154, N181, F293, and E377; that span reads GS. N181 contributes to the Mg(2+) binding site.

It belongs to the transketolase family. DXPS subfamily. In terms of assembly, homodimer. It depends on Mg(2+) as a cofactor. The cofactor is thiamine diphosphate.

The catalysed reaction is D-glyceraldehyde 3-phosphate + pyruvate + H(+) = 1-deoxy-D-xylulose 5-phosphate + CO2. Its pathway is metabolic intermediate biosynthesis; 1-deoxy-D-xylulose 5-phosphate biosynthesis; 1-deoxy-D-xylulose 5-phosphate from D-glyceraldehyde 3-phosphate and pyruvate: step 1/1. Its function is as follows. Catalyzes the acyloin condensation reaction between C atoms 2 and 3 of pyruvate and glyceraldehyde 3-phosphate to yield 1-deoxy-D-xylulose-5-phosphate (DXP). In Bacteroides fragilis (strain ATCC 25285 / DSM 2151 / CCUG 4856 / JCM 11019 / LMG 10263 / NCTC 9343 / Onslow / VPI 2553 / EN-2), this protein is 1-deoxy-D-xylulose-5-phosphate synthase.